The sequence spans 95 residues: Protein TusB (95 aa).

The protein belongs to the DsrH/TusB family. Heterohexamer, formed by a dimer of trimers. The hexameric TusBCD complex contains 2 copies each of TusB, TusC and TusD. The TusBCD complex interacts with TusE.

It is found in the cytoplasm. Functionally, part of a sulfur-relay system required for 2-thiolation of 5-methylaminomethyl-2-thiouridine (mnm(5)s(2)U) at tRNA wobble positions. This is Protein TusB from Shigella sonnei (strain Ss046).